Consider the following 373-residue polypeptide: Histidinol-phosphate aminotransferase (373 aa).

The residue at position 230 (K230) is an N6-(pyridoxal phosphate)lysine.

Belongs to the class-II pyridoxal-phosphate-dependent aminotransferase family. Histidinol-phosphate aminotransferase subfamily. Homodimer. Requires pyridoxal 5'-phosphate as cofactor.

It catalyses the reaction L-histidinol phosphate + 2-oxoglutarate = 3-(imidazol-4-yl)-2-oxopropyl phosphate + L-glutamate. The protein operates within amino-acid biosynthesis; L-histidine biosynthesis; L-histidine from 5-phospho-alpha-D-ribose 1-diphosphate: step 7/9. The protein is Histidinol-phosphate aminotransferase of Synechococcus sp. (strain ATCC 27144 / PCC 6301 / SAUG 1402/1) (Anacystis nidulans).